A 174-amino-acid polypeptide reads, in one-letter code: Protein GrpE (174 aa).

Belongs to the GrpE family. As to quaternary structure, homodimer.

It localises to the cytoplasm. In terms of biological role, participates actively in the response to hyperosmotic and heat shock by preventing the aggregation of stress-denatured proteins, in association with DnaK and GrpE. It is the nucleotide exchange factor for DnaK and may function as a thermosensor. Unfolded proteins bind initially to DnaJ; upon interaction with the DnaJ-bound protein, DnaK hydrolyzes its bound ATP, resulting in the formation of a stable complex. GrpE releases ADP from DnaK; ATP binding to DnaK triggers the release of the substrate protein, thus completing the reaction cycle. Several rounds of ATP-dependent interactions between DnaJ, DnaK and GrpE are required for fully efficient folding. The protein is Protein GrpE of Methanothermobacter thermautotrophicus (strain ATCC 29096 / DSM 1053 / JCM 10044 / NBRC 100330 / Delta H) (Methanobacterium thermoautotrophicum).